The chain runs to 1680 residues: RAF-like serine/threonine-protein kinase PRAF (1680 aa).

The interval 86-163 is disordered; sequence FSPSDPHNSV…TPSDDGKDFP (78 aa). Positions 166–267 constitute a PB1 domain; the sequence is RVKFMCSFGG…SRLRVFLFPA (102 aa). Disordered regions lie at residues 363 to 388, 417 to 516, 556 to 580, 594 to 613, 641 to 672, 700 to 725, and 1186 to 1226; these read LTGNLSNRSNAPSAPSSAPSSPPLLA, PQYT…DSQQ, PDMLQSSGAQPAVSGQQQQGYQPQQ, GANHEGAYRQGDQQQQSQQF, QSTSYHGSAPSSPRPGFRELPSRHLPGGPQLQ, RSFRLSSSPPRYRDHHPHSEERLHRQ, and LPNA…LGGQ. Residues 366–388 show a composition bias toward low complexity; that stretch reads NLSNRSNAPSAPSSAPSSPPLLA. The span at 446-482 shows a compositional bias: basic and acidic residues; sequence HEMHYRSTDSRRGPESPPKKFHDALHQDHPITVEQRR. Low complexity-rich tracts occupy residues 560–580 and 603–613; these read QSSGAQPAVSGQQQQGYQPQQ and QGDQQQQSQQF. The span at 641–651 shows a compositional bias: polar residues; it reads QSTSYHGSAPS. Residues 1204–1217 are compositionally biased toward low complexity; that stretch reads SRSSSSSLSELSKS. Ser1248 is subject to Phosphoserine. The segment covering 1339 to 1354 has biased composition (basic and acidic residues); that stretch reads ASTVDKENQEEVRTGL. Positions 1339-1372 are disordered; it reads ASTVDKENQEEVRTGLDEPADEDKANSTGLGSDP. A Phosphoserine modification is found at Ser1365. The 267-residue stretch at 1389–1655 folds into the Protein kinase domain; that stretch reads LEELRELGSG…SDIAKELRTM (267 aa). Residues 1395-1403 and Lys1416 contribute to the ATP site; that span reads LGSGTFGTV. Residue Asp1518 is the Proton acceptor of the active site. The disordered stretch occupies residues 1661 to 1680; the sequence is PKTQAQTQGQSHPHPQMQIV.

Belongs to the protein kinase superfamily. Ser/Thr protein kinase family. Post-translationally, hyperphosphorylated in response to auxin. Its phosphorylation state is also rapidly stimulated by photosynthetic activity (e.g. in response to blue light and red light irradiation); dephosphorylated in the darkness.

It is found in the cytoplasm. The catalysed reaction is L-seryl-[protein] + ATP = O-phospho-L-seryl-[protein] + ADP + H(+). It carries out the reaction L-threonyl-[protein] + ATP = O-phospho-L-threonyl-[protein] + ADP + H(+). Activated by auxin via rapid phosphorylation. Regulated by photosynthesis-activity-dependent changes in its phosphorylation status. Its function is as follows. RAF-like protein kinase acting as a central mediator of a fast response pathway to auxin involving proteins phosphorylation, and leading to rapid cellular responses including membrane depolarization and cytoplasmic streaming. Required for general growth and developmental process. Photosynthesis signaling kinase involved in the regulation of the sucrose metabolism involving PGM1. Necessary for optimal chloroplast electron transport rate (ETR). The sequence is that of RAF-like serine/threonine-protein kinase PRAF from Marchantia polymorpha (Common liverwort).